The primary structure comprises 312 residues: 3-methyl-2-oxobutanoate hydroxymethyltransferase (312 aa).

The protein belongs to the PanB family.

It carries out the reaction 3-methyl-2-oxobutanoate + (6R)-5,10-methylene-5,6,7,8-tetrahydrofolate + H2O = 2-dehydropantoate + (6S)-5,6,7,8-tetrahydrofolate. It functions in the pathway cofactor biosynthesis; (R)-pantothenate biosynthesis; (R)-pantoate from 3-methyl-2-oxobutanoate: step 1/2. Its function is as follows. Probable 3-methyl-2-oxobutanoate hydroxymethyltransferase required for pantothenic acid biosynthesis. Acts downstream in the pantothenic acid pathway. This is 3-methyl-2-oxobutanoate hydroxymethyltransferase from Saccharomyces cerevisiae (strain ATCC 204508 / S288c) (Baker's yeast).